Reading from the N-terminus, the 482-residue chain is MPSFWTQISGPRLYGIFGQPNRQEPTLENLGNTVISFSAGIYYIASSLAFGPVILCYLYSRDWLTPAGMLTILKYAGYLTLIGYGARTFGRLFDETNSRFLDIWENEKNKKDDNSHAALKKYDFELLDVIPDFVARPNSDLWHLKPEVAEAGVVTRGLASWAIHAFGRHLIYPGSMALLKYMMRPNLNAARKLLVQNKNGQRLWIKSSEGDTLDAMFLRGTNQSQDLIICFEGNAGFYEIGVMNSPAQLGYTTLGFNLPGFGESTGLPYAVNTLAAADAVMQYAIQVLGYRQENIVLFGWSIGGFPVAWLASNYPNVKAVVLDATFDDLLPLALFRMPTFFSTIVEHAIRNHMNLQIDKLLARYKGPIRLIRRLQEEILTTAVDDQPENVRRATNRINWLLKSIIKDRHPELIQNLEPQVDRWLDMTPTERLMHSGVSLREESTQRKRLFDACNHYLIDFDANHVTPLDPQYFNIPHGRDTF.

In terms of domain architecture, AB hydrolase-1 spans 231 to 459 (FEGNAGFYEI…FDACNHYLID (229 aa)).

This is an uncharacterized protein from Caenorhabditis elegans.